A 152-amino-acid chain; its full sequence is Protein NrdI (152 aa).

Belongs to the NrdI family.

Its function is as follows. Probably involved in ribonucleotide reductase function. This is Protein NrdI from Mycobacterium sp. (strain JLS).